We begin with the raw amino-acid sequence, 359 residues long: UPF0496 protein At3g57100 (359 aa).

A coiled-coil region spans residues 179–208 (HEELAKMVVKLEKTMKDIDKKLRRVRGRRA). Residues 214–234 (LLAPVIAVIFLSKLVAGLVPI) traverse the membrane as a helical segment.

It belongs to the UPF0496 family.

Its subcellular location is the membrane. This Arabidopsis thaliana (Mouse-ear cress) protein is UPF0496 protein At3g57100.